The primary structure comprises 261 residues: tRNA pseudouridine synthase A (261 aa).

Asp-51 (nucleophile) is an active-site residue. Tyr-109 contributes to the substrate binding site.

This sequence belongs to the tRNA pseudouridine synthase TruA family. In terms of assembly, homodimer.

It carries out the reaction uridine(38/39/40) in tRNA = pseudouridine(38/39/40) in tRNA. In terms of biological role, formation of pseudouridine at positions 38, 39 and 40 in the anticodon stem and loop of transfer RNAs. The polypeptide is tRNA pseudouridine synthase A (Shewanella baltica (strain OS223)).